The following is a 221-amino-acid chain: Pectate lyase C (221 aa).

The signal sequence occupies residues 1–27 (MKKIVSILFMFGLVMGFSQFQPSTVFA).

It belongs to the polysaccharide lyase 3 family. Ca(2+) is required as a cofactor.

Its subcellular location is the secreted. The catalysed reaction is Eliminative cleavage of (1-&gt;4)-alpha-D-galacturonan to give oligosaccharides with 4-deoxy-alpha-D-galact-4-enuronosyl groups at their non-reducing ends.. It catalyses the reaction Eliminative cleavage of (1-&gt;4)-alpha-D-galacturonan methyl ester to give oligosaccharides with 4-deoxy-6-O-methyl-alpha-D-galact-4-enuronosyl groups at their non-reducing ends.. It functions in the pathway glycan metabolism; pectin degradation; 2-dehydro-3-deoxy-D-gluconate from pectin: step 2/5. Its function is as follows. Catalyzes the depolymerization of both polygalacturonate and pectins of methyl esterification degree from 22 to 89%, with an endo mode of action. In contrast to the majority of pectate lyases, displays high activity on highly methylated pectins. Is also able to cleave trigalacturonate to galacturonic acid and unsaturated digalacturonate. In Bacillus subtilis (strain 168), this protein is Pectate lyase C (pelC).